A 74-amino-acid chain; its full sequence is uncharacterized protein (74 aa).

Composition is skewed to basic and acidic residues over residues 1–13 (MKKQ…HQLK) and 20–60 (IKAK…KSFE). The segment at 1–74 (MKKQKSIDKH…ESQMDWHQYK (74 aa)) is disordered. Positions 64–74 (NESQMDWHQYK) are enriched in polar residues.

This is an uncharacterized protein from Bacillus subtilis (strain 168).